Reading from the N-terminus, the 630-residue chain is MTDTNHSSMRQHSLQSLAIAAIGVVFGDIGTSPLYSLKEAFSPAHGIPLTPSAILGVISLLFWAIILVVGIKYVLFVMRADNNGEGGVLALMALSLRPLNPKSRITGLMMALGIFGACMFYGDAVITPAISVMSAVEGLEVATPQLSHLVLPITIVILIALFWIQRHGTATVGKLFGPIMVIWFVTIAALGVYHIARAPMIVSAINPYYAFSFMSEHVLLAYVVLGSVVLVLTGAEALYADMGHFGAKPIRLAAYVLVMPSLVLNYFGQGALLLLDPKAIENPFFLLAPQWAALPLVVLSTVATVIASQAVISGAYSLTSQAIQLGYVPRMKILHTSELAIGQIYVPVVNWLLLFVILCIVIGFKSSDNLAAAYGIAVTATMVITTILAAVVMVKVWNWNKLLVAMIIGVFLVIDLGFFGANLLKVEQGGWLPLGIGALLFFLLMTWYKGRHIVKERTAADGIPLAPFLQGLLAHPPHRVSGTAIYLTGNDTLVPVSLLHNLKHNKVLHERTIFMTFVTRDIPYVKDDERVTVHDAGEGLYIVKAEYGFNETPDVKAVLEEVSCQRAMTFELMDTSFFLARETVVPTHLPGMSIWRERVFAWMHQNAAKPTDFFAIPANRVVELGTKIEI.

Transmembrane regions (helical) follow at residues 17–37 (LAIA…LYSL), 51–71 (PSAI…VVGI), 105–125 (ITGL…GDAV), 144–164 (PQLS…LFWI), 175–195 (LFGP…VYHI), 218–238 (VLLA…AEAL), 255–275 (YVLV…LLLL), 283–303 (PFFL…STVA), 344–364 (IYVP…VIGF), 374–394 (YGIA…VVMV), 402–422 (LLVA…FGAN), and 428–448 (QGGW…MTWY).

This sequence belongs to the HAK/KUP transporter (TC 2.A.72) family.

Its subcellular location is the cell inner membrane. It catalyses the reaction K(+)(in) + H(+)(in) = K(+)(out) + H(+)(out). Functionally, transport of potassium into the cell. Likely operates as a K(+):H(+) symporter. This chain is Probable potassium transport system protein Kup, found in Burkholderia thailandensis (strain ATCC 700388 / DSM 13276 / CCUG 48851 / CIP 106301 / E264).